Reading from the N-terminus, the 403-residue chain is Chromatin structure-remodeling complex subunit rsc58 (403 aa).

A compositionally biased stretch (low complexity) spans 376 to 389 (SLSMNGSLSPSSTN). Positions 376–403 (SLSMNGSLSPSSTNVPLQSYRRTTKSRR) are disordered. Phosphoserine is present on serine 384.

In terms of assembly, component of the RSC complex composed of at least arp9, arp42, rsc1, rsc4, rsc7, rsc9, rsc58, sfh1, snf21, ssr1, ssr2, ssr3 and ssr4. The complex interacts with histone and histone variant components of centromeric chromatin.

The protein resides in the cytoplasm. The protein localises to the nucleus. Functionally, component of the chromatin structure remodeling complex (RSC), which is involved in transcription regulation and nucleosome positioning. Controls particularly membrane and organelle development genes. The chain is Chromatin structure-remodeling complex subunit rsc58 (rsc58) from Schizosaccharomyces pombe (strain 972 / ATCC 24843) (Fission yeast).